Here is a 445-residue protein sequence, read N- to C-terminus: tRNA-2-methylthio-N(6)-dimethylallyladenosine synthase (445 aa).

Residues 3–124 (KKLYIKTYGC…LPELISKVVR (122 aa)) enclose the MTTase N-terminal domain. Residues cysteine 12, cysteine 48, cysteine 87, cysteine 162, cysteine 166, and cysteine 169 each coordinate [4Fe-4S] cluster. A Radical SAM core domain is found at 148–380 (YPQGTSAFIS…QQELMAQQLA (233 aa)). The 63-residue stretch at 383 to 445 (TSCVGSTMKV…SLNSLTGEIL (63 aa)) folds into the TRAM domain.

The protein belongs to the methylthiotransferase family. MiaB subfamily. Monomer. [4Fe-4S] cluster is required as a cofactor.

It localises to the cytoplasm. It carries out the reaction N(6)-dimethylallyladenosine(37) in tRNA + (sulfur carrier)-SH + AH2 + 2 S-adenosyl-L-methionine = 2-methylsulfanyl-N(6)-dimethylallyladenosine(37) in tRNA + (sulfur carrier)-H + 5'-deoxyadenosine + L-methionine + A + S-adenosyl-L-homocysteine + 2 H(+). Functionally, catalyzes the methylthiolation of N6-(dimethylallyl)adenosine (i(6)A), leading to the formation of 2-methylthio-N6-(dimethylallyl)adenosine (ms(2)i(6)A) at position 37 in tRNAs that read codons beginning with uridine. The sequence is that of tRNA-2-methylthio-N(6)-dimethylallyladenosine synthase from Rickettsia rickettsii (strain Iowa).